Reading from the N-terminus, the 65-residue chain is Cell death protein rpr (65 aa).

As to quaternary structure, interacts with Diap2 (via BIR2 domain).

Its function is as follows. Activator of apoptosis, as well as grim and hid, that acts on the effector Dredd. This chain is Cell death protein rpr (rpr), found in Drosophila melanogaster (Fruit fly).